We begin with the raw amino-acid sequence, 423 residues long: Riboflavin biosynthesis protein RibBA (423 aa).

The DHBP synthase stretch occupies residues 1-204 (MTRLDSVERA…IADLIEWRRK (204 aa)). Residues 28 to 29 (RE), Asp-33, 141 to 145 (RPGHT), and Glu-165 contribute to the D-ribulose 5-phosphate site. Mg(2+) is bound at residue Glu-29. His-144 provides a ligand contact to Mg(2+). The interval 205 to 423 (HEKHIARVAE…AVPGEFGGAV (219 aa)) is GTP cyclohydrolase II. 259–263 (RVHSE) is a binding site for GTP. 3 residues coordinate Zn(2+): Cys-264, Cys-275, and Cys-277. Residues Gln-280, 303–305 (EGR), and Thr-325 contribute to the GTP site. Asp-337 (proton acceptor; for GTP cyclohydrolase activity) is an active-site residue. The active-site Nucleophile; for GTP cyclohydrolase activity is Arg-339. The GTP site is built by Thr-360 and Lys-365.

In the N-terminal section; belongs to the DHBP synthase family. It in the C-terminal section; belongs to the GTP cyclohydrolase II family. The cofactor is Mg(2+). It depends on Mn(2+) as a cofactor. Requires Zn(2+) as cofactor.

It catalyses the reaction D-ribulose 5-phosphate = (2S)-2-hydroxy-3-oxobutyl phosphate + formate + H(+). The catalysed reaction is GTP + 4 H2O = 2,5-diamino-6-hydroxy-4-(5-phosphoribosylamino)-pyrimidine + formate + 2 phosphate + 3 H(+). Its pathway is cofactor biosynthesis; riboflavin biosynthesis; 2-hydroxy-3-oxobutyl phosphate from D-ribulose 5-phosphate: step 1/1. The protein operates within cofactor biosynthesis; riboflavin biosynthesis; 5-amino-6-(D-ribitylamino)uracil from GTP: step 1/4. Its function is as follows. Catalyzes the conversion of D-ribulose 5-phosphate to formate and 3,4-dihydroxy-2-butanone 4-phosphate. In terms of biological role, catalyzes the conversion of GTP to 2,5-diamino-6-ribosylamino-4(3H)-pyrimidinone 5'-phosphate (DARP), formate and pyrophosphate. This chain is Riboflavin biosynthesis protein RibBA, found in Mycolicibacterium gilvum (strain PYR-GCK) (Mycobacterium gilvum (strain PYR-GCK)).